Here is a 618-residue protein sequence, read N- to C-terminus: Auxin efflux carrier component 3a (618 aa).

The Extracellular portion of the chain corresponds to 1-6 (MISGHD). Residues 7–27 (FYTVMAAVVPLYVAMFLAYGS) form a helical membrane-spanning segment. The Cytoplasmic segment spans residues 28–38 (VRWWGIFTPDQ). A helical transmembrane segment spans residues 39 to 59 (CSGINRFVAIFAVPLLSFHFI). Val51 contacts (indol-3-yl)acetate. The Extracellular portion of the chain corresponds to 60–70 (STNDPYAMNLR). A helical membrane pass occupies residues 71 to 90 (FLAADTLQKLLVLAGLAAWS). The Cytoplasmic segment spans residues 91-104 (RLPSRTGAPRLDWS). A helical transmembrane segment spans residues 105–125 (ITLFSLSTLPNTLVMGIPLLI). Residues Asn115 and Leu117 each coordinate (indol-3-yl)acetate. Over 126–134 (AMYGPYSGS) the chain is Extracellular. The helical transmembrane segment at 135 to 155 (LMVQIVVLQCIIWYTLMLFLF) threads the bilayer. A (indol-3-yl)acetate-binding site is contributed by Tyr148. At 156–478 (EFRAARMLIA…LIRNPNTYSS (323 aa)) the chain is on the cytoplasmic side. A compositionally biased stretch (polar residues) spans 281–293 (SLQSSRGPTPRQS). Residues 281 to 312 (SLQSSRGPTPRQSNFDEHSARPPKPPATTTGA) form a disordered region. A helical transmembrane segment spans residues 479–499 (LLGLAWSLVAFRWHVSMPAIV). The Extracellular portion of the chain corresponds to 500-502 (EKS). A helical membrane pass occupies residues 503-523 (ISILSDAGLGMAMFSLGLFMA). The Cytoplasmic portion of the chain corresponds to 524 to 539 (LQPSIIACGKSAAVVS). Residues 540–560 (MAVRFLAGPAVMAAASIAIGL) form a helical membrane-spanning segment. Topologically, residues 561 to 563 (RGT) are extracellular. Residues 564 to 584 (LLHVAIVQAALPQGIVPFVFA) form a helical membrane-spanning segment. Residues Ile578 and Val579 each coordinate (indol-3-yl)acetate. Topologically, residues 585–597 (KEYNVHPAILSTA) are cytoplasmic. A helical membrane pass occupies residues 598-618 (VIFGMLIALPITLLYYILLGL).

It belongs to the auxin efflux carrier (TC 2.A.69.1) family. As to quaternary structure, homodimer. In terms of tissue distribution, expressed in coleoptiles, roots, vascular bundles of leaves, shoots, lamina joints and vascular bundles of the lemma and filament. Expressed in stem bases, stems, leaves and young panicles.

The protein resides in the cell membrane. In terms of biological role, acts as a component of the auxin efflux carrier. Involved in the polar auxin transport which may regulate crown root development and response to water stress. This Oryza sativa subsp. japonica (Rice) protein is Auxin efflux carrier component 3a.